We begin with the raw amino-acid sequence, 201 residues long: Nucleoid occlusion factor SlmA (201 aa).

The HTH tetR-type domain occupies 14–75 (KERQQQVLEV…ALIERIEMTL (62 aa)). The H-T-H motif DNA-binding region spans 38–57 (TTERLSKAVGVSEGALYRYF).

Belongs to the nucleoid occlusion factor SlmA family. As to quaternary structure, homodimer. Interacts with FtsZ.

The protein localises to the cytoplasm. It localises to the nucleoid. In terms of biological role, required for nucleoid occlusion (NO) phenomenon, which prevents Z-ring formation and cell division over the nucleoid. Acts as a DNA-associated cell division inhibitor that binds simultaneously chromosomal DNA and FtsZ, and disrupts the assembly of FtsZ polymers. SlmA-DNA-binding sequences (SBS) are dispersed on non-Ter regions of the chromosome, preventing FtsZ polymerization at these regions. This is Nucleoid occlusion factor SlmA from Glaesserella parasuis serovar 5 (strain SH0165) (Haemophilus parasuis).